A 260-amino-acid chain; its full sequence is PsbP domain-containing protein 4, chloroplastic (260 aa).

Belongs to the PsbP family.

Its subcellular location is the plastid. The protein localises to the chloroplast thylakoid lumen. The chain is PsbP domain-containing protein 4, chloroplastic (PPD4) from Arabidopsis thaliana (Mouse-ear cress).